The primary structure comprises 807 residues: Putative AC transposase (807 aa).

2 disordered regions span residues 42–140 and 785–807; these read GLKR…KKCT and MDED…GSSP. Polar residues predominate over residues 84–98; the sequence is QSVSSSNANGTATDP. A run of 10 repeats spans residues 109–110, 111–112, 113–114, 115–116, 117–118, 119–120, 121–122, 123–124, 125–126, and 127–128. The segment at 109-128 is 10 X 2 AA tandem repeats of P-[QE]; it reads PQPQPQPQPEPQPQPQPEPE. A compositionally biased stretch (pro residues) spans 110–125; sequence QPQPQPQPEPQPQPQP.

This is Putative AC transposase from Zea mays (Maize).